A 93-amino-acid chain; its full sequence is Protein F-93 (93 aa).

In terms of assembly, homodimer.

Probable transcription factor that recognizes a (pseudo-)palindromic DNA target sequence. The polypeptide is Protein F-93 (Saccharolobus solfataricus (Sulfolobus solfataricus)).